Here is a 484-residue protein sequence, read N- to C-terminus: Glutamyl-tRNA(Gln) amidotransferase subunit A (484 aa).

Catalysis depends on charge relay system residues lysine 76 and serine 151. Serine 175 serves as the catalytic Acyl-ester intermediate.

It belongs to the amidase family. GatA subfamily. Heterotrimer of A, B and C subunits.

The enzyme catalyses L-glutamyl-tRNA(Gln) + L-glutamine + ATP + H2O = L-glutaminyl-tRNA(Gln) + L-glutamate + ADP + phosphate + H(+). Its function is as follows. Allows the formation of correctly charged Gln-tRNA(Gln) through the transamidation of misacylated Glu-tRNA(Gln) in organisms which lack glutaminyl-tRNA synthetase. The reaction takes place in the presence of glutamine and ATP through an activated gamma-phospho-Glu-tRNA(Gln). This chain is Glutamyl-tRNA(Gln) amidotransferase subunit A, found in Saccharophagus degradans (strain 2-40 / ATCC 43961 / DSM 17024).